The sequence spans 172 residues: MTKKVAIILSNEFEDIELTSPKEAIEEAGFETEIIGDTANAEVVGKHGEKVIVDVSIADAKPEDYDGLLIPGGFSPDHLRGDAEGRYGTFAKYFTKNDVPAFAICHGPQILIDTDDLNGRTLTAVLNVRKDLSNAGANVVDESVVVDKNIVTSRTPDDLDDFNREIVKQLQA.

Positions 3 to 171 (KKVAIILSNE…FNREIVKQLQ (169 aa)) constitute a PfpI endopeptidase domain.

The protein belongs to the peptidase C56 family.

This is an uncharacterized protein from Staphylococcus haemolyticus (strain JCSC1435).